The chain runs to 433 residues: Probable phosphoglucosamine mutase (433 aa).

Ser-91 serves as the catalytic Phosphoserine intermediate. The Mg(2+) site is built by Ser-91, Asp-229, Asp-231, and Asp-233. Ser-91 bears the Phosphoserine mark.

It belongs to the phosphohexose mutase family. Mg(2+) serves as cofactor. Activated by phosphorylation.

The catalysed reaction is alpha-D-glucosamine 1-phosphate = D-glucosamine 6-phosphate. In terms of biological role, catalyzes the conversion of glucosamine-6-phosphate to glucosamine-1-phosphate. The chain is Probable phosphoglucosamine mutase from Methanococcoides burtonii (strain DSM 6242 / NBRC 107633 / OCM 468 / ACE-M).